The following is a 191-amino-acid chain: Cytochrome c biogenesis ATP-binding export protein CcmA (191 aa).

The ABC transporter domain maps to 6 to 189; the sequence is LVATDIACRR…RVRTLAIRNF (184 aa). 38-45 contributes to the ATP binding site; that stretch reads GANGIGKS.

It belongs to the ABC transporter superfamily. CcmA exporter (TC 3.A.1.107) family. As to quaternary structure, the complex is composed of two ATP-binding proteins (CcmA) and two transmembrane proteins (CcmB).

It localises to the cell inner membrane. It carries out the reaction heme b(in) + ATP + H2O = heme b(out) + ADP + phosphate + H(+). In terms of biological role, part of the ABC transporter complex CcmAB involved in the biogenesis of c-type cytochromes; once thought to export heme, this seems not to be the case, but its exact role is uncertain. Responsible for energy coupling to the transport system. In Novosphingobium aromaticivorans (strain ATCC 700278 / DSM 12444 / CCUG 56034 / CIP 105152 / NBRC 16084 / F199), this protein is Cytochrome c biogenesis ATP-binding export protein CcmA.